The sequence spans 469 residues: Chromosomal replication initiator protein DnaA (469 aa).

The segment at 1–71 (MKEFWQTCVS…EALAAEWYQR (71 aa)) is domain I, interacts with DnaA modulators. Residues 71 to 131 (RPVQVTFELP…DAANIVYERS (61 aa)) form a domain II region. The segment at 132–348 (RLNTDLTFEN…GALRKVLAYA (217 aa)) is domain III, AAA+ region. The ATP site is built by Gly-176, Gly-178, Lys-179, and Thr-180. Positions 349-469 (RFHGRDVLTV…LHVLEQTLKG (121 aa)) are domain IV, binds dsDNA.

The protein belongs to the DnaA family. Oligomerizes as a right-handed, spiral filament on DNA at oriC.

The protein localises to the cytoplasm. Plays an essential role in the initiation and regulation of chromosomal replication. ATP-DnaA binds to the origin of replication (oriC) to initiate formation of the DNA replication initiation complex once per cell cycle. Binds the DnaA box (a 9 base pair repeat at the origin) and separates the double-stranded (ds)DNA. Forms a right-handed helical filament on oriC DNA; dsDNA binds to the exterior of the filament while single-stranded (ss)DNA is stabiized in the filament's interior. The ATP-DnaA-oriC complex binds and stabilizes one strand of the AT-rich DNA unwinding element (DUE), permitting loading of DNA polymerase. After initiation quickly degrades to an ADP-DnaA complex that is not apt for DNA replication. Binds acidic phospholipids. This Bordetella parapertussis (strain 12822 / ATCC BAA-587 / NCTC 13253) protein is Chromosomal replication initiator protein DnaA.